A 477-amino-acid chain; its full sequence is Exodeoxyribonuclease 7 large subunit (477 aa).

The disordered stretch occupies residues 452–477 (KAAAAPKRVKKSPPPGTSGAQEDLFG).

This sequence belongs to the XseA family. As to quaternary structure, heterooligomer composed of large and small subunits.

The protein resides in the cytoplasm. The catalysed reaction is Exonucleolytic cleavage in either 5'- to 3'- or 3'- to 5'-direction to yield nucleoside 5'-phosphates.. In terms of biological role, bidirectionally degrades single-stranded DNA into large acid-insoluble oligonucleotides, which are then degraded further into small acid-soluble oligonucleotides. The sequence is that of Exodeoxyribonuclease 7 large subunit from Erythrobacter litoralis (strain HTCC2594).